The chain runs to 397 residues: Tryptophan synthase beta chain (397 aa).

At Lys-86 the chain carries N6-(pyridoxal phosphate)lysine.

The protein belongs to the TrpB family. In terms of assembly, tetramer of two alpha and two beta chains. The cofactor is pyridoxal 5'-phosphate.

The enzyme catalyses (1S,2R)-1-C-(indol-3-yl)glycerol 3-phosphate + L-serine = D-glyceraldehyde 3-phosphate + L-tryptophan + H2O. It participates in amino-acid biosynthesis; L-tryptophan biosynthesis; L-tryptophan from chorismate: step 5/5. Its function is as follows. The beta subunit is responsible for the synthesis of L-tryptophan from indole and L-serine. This Buchnera aphidicola subsp. Diuraphis noxia protein is Tryptophan synthase beta chain (trpB).